A 497-amino-acid polypeptide reads, in one-letter code: Acetyl-coenzyme A carboxylase carboxyl transferase subunit beta, chloroplastic (497 aa).

The CoA carboxyltransferase N-terminal domain maps to 230 to 497 (LWIQCENCYG…FFPLNQNSIK (268 aa)). Zn(2+)-binding residues include Cys234, Cys237, Cys253, and Cys256. The C4-type zinc-finger motif lies at 234–256 (CENCYGLNYKKFFRSKMNICEQC).

The protein belongs to the AccD/PCCB family. In terms of assembly, acetyl-CoA carboxylase is a heterohexamer composed of biotin carboxyl carrier protein, biotin carboxylase and 2 subunits each of ACCase subunit alpha and ACCase plastid-coded subunit beta (accD). Zn(2+) serves as cofactor.

It localises to the plastid. It is found in the chloroplast stroma. The catalysed reaction is N(6)-carboxybiotinyl-L-lysyl-[protein] + acetyl-CoA = N(6)-biotinyl-L-lysyl-[protein] + malonyl-CoA. It participates in lipid metabolism; malonyl-CoA biosynthesis; malonyl-CoA from acetyl-CoA: step 1/1. Functionally, component of the acetyl coenzyme A carboxylase (ACC) complex. Biotin carboxylase (BC) catalyzes the carboxylation of biotin on its carrier protein (BCCP) and then the CO(2) group is transferred by the transcarboxylase to acetyl-CoA to form malonyl-CoA. The chain is Acetyl-coenzyme A carboxylase carboxyl transferase subunit beta, chloroplastic from Platanus occidentalis (Sycamore).